A 227-amino-acid chain; its full sequence is ATP-dependent dethiobiotin synthetase BioD (227 aa).

13-18 (DAGKTT) is an ATP binding site. T17 lines the Mg(2+) pocket. Residue K38 is part of the active site. ATP contacts are provided by residues D55, 118 to 121 (EGAG), 178 to 179 (NR), 207 to 209 (PYI), and E214. D55 and E118 together coordinate Mg(2+).

It belongs to the dethiobiotin synthetase family. In terms of assembly, homodimer. The cofactor is Mg(2+).

It localises to the cytoplasm. The enzyme catalyses (7R,8S)-7,8-diammoniononanoate + CO2 + ATP = (4R,5S)-dethiobiotin + ADP + phosphate + 3 H(+). Its pathway is cofactor biosynthesis; biotin biosynthesis; biotin from 7,8-diaminononanoate: step 1/2. Functionally, catalyzes a mechanistically unusual reaction, the ATP-dependent insertion of CO2 between the N7 and N8 nitrogen atoms of 7,8-diaminopelargonic acid (DAPA, also called 7,8-diammoniononanoate) to form a ureido ring. The polypeptide is ATP-dependent dethiobiotin synthetase BioD (Tolumonas auensis (strain DSM 9187 / NBRC 110442 / TA 4)).